The primary structure comprises 161 residues: UPF0303 protein Spro_1996 (161 aa).

This sequence belongs to the UPF0303 family.

The protein is UPF0303 protein Spro_1996 of Serratia proteamaculans (strain 568).